Here is a 424-residue protein sequence, read N- to C-terminus: Tyrosine--tRNA ligase (424 aa).

An L-tyrosine-binding site is contributed by Tyr-37. Residues Pro-42–His-51 carry the 'HIGH' region motif. Lys-144 carries the post-translational modification N6-acetyllysine. L-tyrosine contacts are provided by Tyr-175 and Gln-179. Residues Lys-235–Thr-239 carry the 'KMSKS' region motif. Lys-238 is a binding site for ATP. Residues Ala-357–Gly-414 enclose the S4 RNA-binding domain.

It belongs to the class-I aminoacyl-tRNA synthetase family. TyrS type 1 subfamily. In terms of assembly, homodimer.

The protein resides in the cytoplasm. It carries out the reaction tRNA(Tyr) + L-tyrosine + ATP = L-tyrosyl-tRNA(Tyr) + AMP + diphosphate + H(+). Catalyzes the attachment of tyrosine to tRNA(Tyr) in a two-step reaction: tyrosine is first activated by ATP to form Tyr-AMP and then transferred to the acceptor end of tRNA(Tyr). This chain is Tyrosine--tRNA ligase, found in Shigella dysenteriae serotype 1 (strain Sd197).